Here is a 345-residue protein sequence, read N- to C-terminus: Phosphoribosylformylglycinamidine cyclo-ligase (345 aa).

This sequence belongs to the AIR synthase family.

The protein resides in the cytoplasm. It catalyses the reaction 2-formamido-N(1)-(5-O-phospho-beta-D-ribosyl)acetamidine + ATP = 5-amino-1-(5-phospho-beta-D-ribosyl)imidazole + ADP + phosphate + H(+). It functions in the pathway purine metabolism; IMP biosynthesis via de novo pathway; 5-amino-1-(5-phospho-D-ribosyl)imidazole from N(2)-formyl-N(1)-(5-phospho-D-ribosyl)glycinamide: step 2/2. This Shigella dysenteriae serotype 1 (strain Sd197) protein is Phosphoribosylformylglycinamidine cyclo-ligase.